A 595-amino-acid chain; its full sequence is 73 kDa paraflagellar rod protein (595 aa).

The interval D294 to D317 is disordered. The interval D317–G337 is calmodulin-binding.

In terms of assembly, heterodimer of a 69 kDa and a 73 kDa protein.

Its subcellular location is the cell projection. It localises to the cilium. The protein localises to the flagellum. It is found in the cytoplasm. The protein resides in the cytoskeleton. Its function is as follows. Major component of the paraflagellar rod (PFR). The PFR is a highly ordered lattices of fibrous proteins that are located inside the flagellum and assume a fixed orientation with respect to the microtubular axoneme. This chain is 73 kDa paraflagellar rod protein (PFRC), found in Trypanosoma brucei brucei.